Reading from the N-terminus, the 243-residue chain is Tetraspanin-36 (243 aa).

At methionine 1 to lysine 9 the chain is on the cytoplasmic side. Residues threonine 10–glycine 30 traverse the membrane as a helical segment. Residues serine 31 to threonine 49 lie on the Lumenal side of the membrane. Residues leucine 50–glycine 70 traverse the membrane as a helical segment. The Cytoplasmic portion of the chain corresponds to cysteine 71 to leucine 84. The chain crosses the membrane as a helical span at residues phenylalanine 85–isoleucine 105. Topologically, residues tyrosine 106–alanine 208 are lumenal. Asparagine 149, asparagine 163, and asparagine 174 each carry an N-linked (GlcNAc...) asparagine glycan. A helical membrane pass occupies residues methionine 209–isoleucine 229. At threonine 230–alanine 243 the chain is on the cytoplasmic side.

This sequence belongs to the tetraspanin (TM4SF) family. Post-translationally, N-glycosylated. Strongly expressed in melanophores and xanthophores. Also detected in eye, brain, heart, skin, fin, testis and ovary.

It is found in the golgi apparatus membrane. Its subcellular location is the endoplasmic reticulum membrane. Plays a role in migration and segregation of pigment cells (melanophores and xanthophores). Contributes to pigment stripe patterning in the epidermis. The sequence is that of Tetraspanin-36 from Danio rerio (Zebrafish).